Here is a 419-residue protein sequence, read N- to C-terminus: UDP-N-acetylglucosamine 1-carboxyvinyltransferase (419 aa).

22–23 contributes to the phosphoenolpyruvate binding site; the sequence is KN. Arg95 is a binding site for UDP-N-acetyl-alpha-D-glucosamine. The active-site Proton donor is the Cys119. Cys119 carries the post-translational modification 2-(S-cysteinyl)pyruvic acid O-phosphothioketal. UDP-N-acetyl-alpha-D-glucosamine contacts are provided by residues 164–167, Asp308, and Ile330; that span reads KVSV.

It belongs to the EPSP synthase family. MurA subfamily.

The protein resides in the cytoplasm. The enzyme catalyses phosphoenolpyruvate + UDP-N-acetyl-alpha-D-glucosamine = UDP-N-acetyl-3-O-(1-carboxyvinyl)-alpha-D-glucosamine + phosphate. Its pathway is cell wall biogenesis; peptidoglycan biosynthesis. Functionally, cell wall formation. Adds enolpyruvyl to UDP-N-acetylglucosamine. The protein is UDP-N-acetylglucosamine 1-carboxyvinyltransferase of Rickettsia akari (strain Hartford).